Here is a 567-residue protein sequence, read N- to C-terminus: uncharacterized protein (567 aa).

Residues M1–S31 lie on the Lumenal side of the membrane. A helical transmembrane segment spans residues S32–V52. Residues Q53 to V64 lie on the Cytoplasmic side of the membrane. A helical membrane pass occupies residues I65–I85. The Lumenal portion of the chain corresponds to Q86 to N87. A helical transmembrane segment spans residues M88 to S108. At G109–A128 the chain is on the cytoplasmic side. The chain crosses the membrane as a helical span at residues F129 to L149. Topologically, residues N150–V159 are lumenal. Residues E160 to F180 traverse the membrane as a helical segment. The Cytoplasmic segment spans residues N181 to K188. The chain crosses the membrane as a helical span at residues L189–E209. Over T210–G227 the chain is Lumenal. Residues I228–I248 form a helical membrane-spanning segment. Residues T249 to Y277 lie on the Cytoplasmic side of the membrane. The helical transmembrane segment at F278–L298 threads the bilayer. Topologically, residues K299 to K315 are lumenal. Residues Y316–F338 form a helical membrane-spanning segment. Over T339–P347 the chain is Cytoplasmic. A helical transmembrane segment spans residues I348–F366. The Lumenal portion of the chain corresponds to P367–Q392. Residues M393–E413 traverse the membrane as a helical segment. Residues G414 to T424 lie on the Cytoplasmic side of the membrane. The chain crosses the membrane as a helical span at residues L425–I445. At L446 to K567 the chain is on the lumenal side. A Phosphoserine modification is found at S515.

The protein belongs to the monovalent cation:proton antiporter 1 (CPA1) transporter (TC 2.A.36) family.

Its subcellular location is the golgi apparatus membrane. This is an uncharacterized protein from Schizosaccharomyces pombe (strain 972 / ATCC 24843) (Fission yeast).